Reading from the N-terminus, the 244-residue chain is Adenosine 5'-phosphosulfate reductase (244 aa).

[4Fe-4S] cluster contacts are provided by Cys129, Cys130, Cys212, and Cys215. Cys240 functions as the Nucleophile; cysteine thiosulfonate intermediate in the catalytic mechanism.

It belongs to the PAPS reductase family. CysH subfamily. The cofactor is [4Fe-4S] cluster.

The protein localises to the cytoplasm. The catalysed reaction is [thioredoxin]-disulfide + sulfite + AMP + 2 H(+) = adenosine 5'-phosphosulfate + [thioredoxin]-dithiol. Its pathway is sulfur metabolism; hydrogen sulfide biosynthesis; sulfite from sulfate. Its function is as follows. Catalyzes the formation of sulfite from adenosine 5'-phosphosulfate (APS) using thioredoxin as an electron donor. The protein is Adenosine 5'-phosphosulfate reductase of Neisseria meningitidis serogroup A / serotype 4A (strain DSM 15465 / Z2491).